Consider the following 364-residue polypeptide: MTMLSDLPKIPTLDWADFAEGDTDQRLKLAQGLVQGFKRFGFVKLVNHGLSDELIQQLFAEVKRFYRLPDELKQKAAHPPGPNPQRGWSGIGVESTSKLYGEQTERPSGKLKDAKVGTDFSSSKLSRELTHMKEHYDIGPPTDTQFPTRWPDEQDIPGWRAFMESYYARGQSFCLDLMEALEIGLELPKNTLRSMCIPDGSELRLLHYPEIPAAELRTGDTARIWPHTDFGLITLLFQDGVGGLEVEDPLQQGHYIEVAREQPYEMIVNVSATFERWMNGVIKAAVHRVNITPEGKHVEDAVVPERWSAAYFFKAHKMAHAGPLPAFVTPERPALYDNITALEFQKRRTDLVYTGQQLKVEEAA.

The tract at residues 73–92 (KQKAAHPPGPNPQRGWSGIG) is disordered. The region spanning 199–315 (DGSELRLLHY…RWSAAYFFKA (117 aa)) is the Fe2OG dioxygenase domain. Fe cation contacts are provided by His-227, Asp-229, and His-287. A 2-oxoglutarate-binding site is contributed by Arg-306.

Belongs to the iron/ascorbate-dependent oxidoreductase family. Requires Fe(2+) as cofactor.

It functions in the pathway secondary metabolite biosynthesis. In terms of biological role, 2-oxoglutarate-dependent dioxygenase; part of the gene cluster that mediates the biosynthesis of imizoquins A to D, tripeptide-derived alkaloids that serve a protective role against oxidative stress that are essential for normal germination. ImqB is a canonical three-module NRPS that assembles the tripeptide backbone of the imizoquins via condensation of Trp, Tyr, and Leu-derived precursors. N-methylation by imqF and phenol oxidation by imqC, followed by cyclization via the FAD-dependent oxidase imqH carry out the three-step transformation of L-tyrosine into tetrahydroisoquinoline. Importantly, this sequence requires the presence of a free amine in the tyrosine moiety, indicating that isoquinoline formation occurs prior to peptide bond formation. The imidazolidin-4-one ring of imizoquins could form following additional oxidation of the methyl-derived bridgehead carbon by imqH. Lastly, O-methylation by imqG and leucine hydroxylation by imqE complete biosynthesis of the imizoquins. The chain is 2-oxoglutarate-dependent dioxygenase imqE from Aspergillus flavus (strain ATCC 200026 / FGSC A1120 / IAM 13836 / NRRL 3357 / JCM 12722 / SRRC 167).